The primary structure comprises 621 residues: tRNA uridine 5-carboxymethylaminomethyl modification enzyme MnmG (621 aa).

An FAD-binding site is contributed by 11 to 16 (GGGHAG). 270 to 284 (GPRYCPSIEDKINRF) provides a ligand contact to NAD(+).

It belongs to the MnmG family. As to quaternary structure, homodimer. Heterotetramer of two MnmE and two MnmG subunits. It depends on FAD as a cofactor.

The protein resides in the cytoplasm. In terms of biological role, NAD-binding protein involved in the addition of a carboxymethylaminomethyl (cmnm) group at the wobble position (U34) of certain tRNAs, forming tRNA-cmnm(5)s(2)U34. The sequence is that of tRNA uridine 5-carboxymethylaminomethyl modification enzyme MnmG from Helicobacter pylori (strain Shi470).